A 101-amino-acid chain; its full sequence is Small ribosomal subunit protein uS10 (101 aa).

This sequence belongs to the universal ribosomal protein uS10 family. Part of the 30S ribosomal subunit.

Functionally, involved in the binding of tRNA to the ribosomes. The polypeptide is Small ribosomal subunit protein uS10 (Corynebacterium jeikeium (strain K411)).